Reading from the N-terminus, the 322-residue chain is uncharacterized protein (322 aa).

Composition is skewed to basic residues over residues 1–16 (MPGN…KSGT) and 43–61 (LRPH…RRPV). Residues 1-69 (MPGNSRRRGA…PVKRADETET (69 aa)) form a disordered region. S-adenosyl-L-methionine is bound by residues Gly261, Ile281, and Leu290.

This sequence belongs to the class IV-like SAM-binding methyltransferase superfamily. RNA methyltransferase TrmH family.

This is an uncharacterized protein from Mycobacterium tuberculosis (strain CDC 1551 / Oshkosh).